Consider the following 443-residue polypeptide: Histidinol dehydrogenase (443 aa).

NAD(+) is bound by residues tyrosine 133, glutamine 191, and asparagine 214. Substrate contacts are provided by serine 240, glutamine 262, and histidine 265. Zn(2+)-binding residues include glutamine 262 and histidine 265. Residues glutamate 329 and histidine 330 each act as proton acceptor in the active site. Residues histidine 330, aspartate 363, glutamate 417, and histidine 422 each coordinate substrate. Zn(2+) is bound at residue aspartate 363. Zn(2+) is bound at residue histidine 422.

It belongs to the histidinol dehydrogenase family. As to quaternary structure, homodimer. Zn(2+) is required as a cofactor.

The enzyme catalyses L-histidinol + 2 NAD(+) + H2O = L-histidine + 2 NADH + 3 H(+). It participates in amino-acid biosynthesis; L-histidine biosynthesis; L-histidine from 5-phospho-alpha-D-ribose 1-diphosphate: step 9/9. Functionally, catalyzes the sequential NAD-dependent oxidations of L-histidinol to L-histidinaldehyde and then to L-histidine. This Blochmanniella pennsylvanica (strain BPEN) protein is Histidinol dehydrogenase.